A 140-amino-acid chain; its full sequence is uncharacterized protein (140 aa).

This is an uncharacterized protein from Caenorhabditis elegans.